The sequence spans 326 residues: Elongation factor Ts (326 aa).

An involved in Mg(2+) ion dislocation from EF-Tu region spans residues 80–83; it reads TDFV.

It belongs to the EF-Ts family.

The protein localises to the cytoplasm. In terms of biological role, associates with the EF-Tu.GDP complex and induces the exchange of GDP to GTP. It remains bound to the aminoacyl-tRNA.EF-Tu.GTP complex up to the GTP hydrolysis stage on the ribosome. The polypeptide is Elongation factor Ts (Rhodopirellula baltica (strain DSM 10527 / NCIMB 13988 / SH1)).